The chain runs to 258 residues: UPF0246 protein YaaA (258 aa).

The protein belongs to the UPF0246 family.

The chain is UPF0246 protein YaaA from Shigella boydii serotype 18 (strain CDC 3083-94 / BS512).